A 253-amino-acid chain; its full sequence is Transmembrane protein 69 (253 aa).

The next 5 helical transmembrane spans lie at 104–124 (ALYLGLAGLIPFVSAPLLMNV), 137–157 (VAYGASILSFLGGVRWGFAIP), 165–185 (DWMNLTNSTVPALLAWLALLF), 192–212 (AAVLVIMGLGIALHYDLALLP), and 223–243 (AILTVVAVFSLVGSLINSSVY).

The protein localises to the membrane. In Xenopus tropicalis (Western clawed frog), this protein is Transmembrane protein 69 (tmem69).